Consider the following 133-residue polypeptide: Nucleoside diphosphate kinase (133 aa).

Lysine 9, phenylalanine 57, arginine 85, threonine 91, arginine 102, and asparagine 112 together coordinate ATP. The active-site Pros-phosphohistidine intermediate is the histidine 115.

Belongs to the NDK family. The cofactor is Mg(2+).

It localises to the cytoplasm. The catalysed reaction is a 2'-deoxyribonucleoside 5'-diphosphate + ATP = a 2'-deoxyribonucleoside 5'-triphosphate + ADP. The enzyme catalyses a ribonucleoside 5'-diphosphate + ATP = a ribonucleoside 5'-triphosphate + ADP. In terms of biological role, major role in the synthesis of nucleoside triphosphates other than ATP. The ATP gamma phosphate is transferred to the NDP beta phosphate via a ping-pong mechanism, using a phosphorylated active-site intermediate. The sequence is that of Nucleoside diphosphate kinase from Methanococcus maripaludis (strain DSM 14266 / JCM 13030 / NBRC 101832 / S2 / LL).